Reading from the N-terminus, the 474-residue chain is Zinc finger protein 230 (474 aa).

Residues 8 to 76 form the KRAB domain; it reads VTFKDVAVFF…ETATQREGNS (69 aa). The segment at 80-167 is KRNB; the sequence is TIAEAGPHED…PQQFHSGEKS (88 aa). C2H2-type zinc fingers lie at residues 168 to 190, 196 to 218, 224 to 246, 252 to 274, 280 to 302, 308 to 330, 336 to 358, 364 to 386, and 392 to 414; these read HTCN…QRVH, SKCD…ERVH, FKCE…CKLH, YICE…QIIH, FKCE…CMVH, YKSE…QIIH, YNCK…QRIH, YRCE…QRVH, and YNCK…KKLH. The C2H2-type 10; atypical zinc-finger motif lies at 420–442; sequence FKCEDCGKRLVHRSFCKDQQGDH.

Belongs to the krueppel C2H2-type zinc-finger protein family.

It is found in the nucleus. Its function is as follows. May be involved in transcriptional regulation. In Homo sapiens (Human), this protein is Zinc finger protein 230 (ZNF230).